We begin with the raw amino-acid sequence, 578 residues long: Paraneoplastic antigen Ma6F (578 aa).

2 disordered regions span residues 106 to 221 (AQPQ…AGAA) and 441 to 578 (AAPV…PPGK). Over residues 112-129 (AVARGAGEAGAAGEAGSV) the composition is skewed to low complexity. Gly residues predominate over residues 147 to 159 (GGIGEAGGVGEAG). Residues 160-173 (AAGEAGAAGEAGAA) are compositionally biased toward low complexity. Gly residues predominate over residues 174 to 211 (GEAGGAGEAGGAGEAGGAGEEGGTGEEGGAGEAGGAGE). Residues 449-461 (PAAAQASPAQGDA) are compositionally biased toward low complexity. 2 stretches are compositionally biased toward acidic residues: residues 462–473 (SEADPGAEDADE) and 556–566 (EESENEDEDGA).

The chain is Paraneoplastic antigen Ma6F from Homo sapiens (Human).